Reading from the N-terminus, the 471-residue chain is Methylenetetrahydrofolate--tRNA-(uracil-5-)-methyltransferase TrmFO (471 aa).

An FAD-binding site is contributed by 13 to 18 (GGGLAG).

The protein belongs to the MnmG family. TrmFO subfamily. FAD serves as cofactor.

It is found in the cytoplasm. The enzyme catalyses uridine(54) in tRNA + (6R)-5,10-methylene-5,6,7,8-tetrahydrofolate + NADH + H(+) = 5-methyluridine(54) in tRNA + (6S)-5,6,7,8-tetrahydrofolate + NAD(+). It catalyses the reaction uridine(54) in tRNA + (6R)-5,10-methylene-5,6,7,8-tetrahydrofolate + NADPH + H(+) = 5-methyluridine(54) in tRNA + (6S)-5,6,7,8-tetrahydrofolate + NADP(+). In terms of biological role, catalyzes the folate-dependent formation of 5-methyl-uridine at position 54 (M-5-U54) in all tRNAs. In Azorhizobium caulinodans (strain ATCC 43989 / DSM 5975 / JCM 20966 / LMG 6465 / NBRC 14845 / NCIMB 13405 / ORS 571), this protein is Methylenetetrahydrofolate--tRNA-(uracil-5-)-methyltransferase TrmFO.